The primary structure comprises 59 residues: Large ribosomal subunit protein bL33 (59 aa).

The disordered stretch occupies residues 26–59 (RYTTTKNKKNNTERLVLKKYNPNLKKHTEHKEIK).

Belongs to the bacterial ribosomal protein bL33 family.

The sequence is that of Large ribosomal subunit protein bL33 from Chlorobium phaeobacteroides (strain BS1).